The chain runs to 65 residues: DNA gyrase inhibitor YacG (65 aa).

Residues Cys9, Cys12, Cys28, and Cys32 each contribute to the Zn(2+) site. Residues 43 to 65 form a disordered region; the sequence is EEKRIPSQSENSDSDDWSGQPEQ.

Belongs to the DNA gyrase inhibitor YacG family. In terms of assembly, interacts with GyrB. Requires Zn(2+) as cofactor.

Functionally, inhibits all the catalytic activities of DNA gyrase by preventing its interaction with DNA. Acts by binding directly to the C-terminal domain of GyrB, which probably disrupts DNA binding by the gyrase. The sequence is that of DNA gyrase inhibitor YacG from Photorhabdus laumondii subsp. laumondii (strain DSM 15139 / CIP 105565 / TT01) (Photorhabdus luminescens subsp. laumondii).